The following is a 146-amino-acid chain: Antiholin-like protein LrgA (146 aa).

Helical transmembrane passes span 7 to 29 (YGFLTQAFIFAVIMLVSNMIAAI), 34 to 53 (IPASVVGLVLLFLLLCLKVI), 65 to 87 (LTSLIGFLFVPSGISVMNSLGVM), and 97 to 119 (VILLATIILLGATGLFSQLILSL).

The protein belongs to the CidA/LrgA family. LrgA subfamily.

It localises to the cell membrane. Its function is as follows. Inhibits the expression or activity of extracellular murein hydrolases by interacting, possibly with LrgB, with the holin-like protein CidA. The LrgAB and CidA proteins may affect the proton motive force of the membrane. May be involved in programmed cell death (PCD), possibly triggering PCD in response to antibiotics and environmental stresses. This is Antiholin-like protein LrgA from Bacillus subtilis (strain 168).